Reading from the N-terminus, the 1058-residue chain is Translation initiation factor IF-2 (1058 aa).

The span at 1 to 12 (MNDTKTPGDKTL) shows a compositional bias: basic and acidic residues. Residues 1–468 (MNDTKTPGDK…MTGHRGMQES (468 aa)) are disordered. Residues 54 to 81 (APGEAGAPSGTPAAAPAATPAPAAAAPR) show a composition bias toward low complexity. Pro residues predominate over residues 82-95 (PATPAPAAPRPAAP). Positions 96 to 108 (ATPAQPAAEAKAP) are enriched in low complexity. The segment covering 109 to 119 (APAPTPAPAAP) has biased composition (pro residues). Low complexity-rich tracts occupy residues 120–156 (AAPVAEAPKVEAPAPVAAKPEAAPAAPVAEAPKVEVP) and 164–228 (EPVA…QRPG). Gly residues predominate over residues 244–271 (RSGGPGSDRRGGPGGQNRPGQNRQGGSG). Over residues 292–364 (ARVREVEERR…ARKRFGEETG (73 aa)) the composition is skewed to basic and acidic residues. Residues 368–396 (GASAPSTSTARPLTPRPAGTTTTTGAPAA) show a composition bias toward low complexity. Positions 452–461 (FRRRTQRMTG) are enriched in basic residues. The 171-residue stretch at 555–725 (PRPPVVTIMG…SLQSEVLDLK (171 aa)) folds into the tr-type G domain. The tract at residues 564–571 (GHVDHGKT) is G1. Residue 564–571 (GHVDHGKT) participates in GTP binding. The segment at 589–593 (GITQH) is G2. The segment at 611–614 (DTPG) is G3. Residues 611–615 (DTPGH) and 665–668 (NKID) each bind GTP. The interval 665-668 (NKID) is G4. Residues 701-703 (SAT) are G5.

Belongs to the TRAFAC class translation factor GTPase superfamily. Classic translation factor GTPase family. IF-2 subfamily.

It localises to the cytoplasm. Functionally, one of the essential components for the initiation of protein synthesis. Protects formylmethionyl-tRNA from spontaneous hydrolysis and promotes its binding to the 30S ribosomal subunits. Also involved in the hydrolysis of GTP during the formation of the 70S ribosomal complex. This Azorhizobium caulinodans (strain ATCC 43989 / DSM 5975 / JCM 20966 / LMG 6465 / NBRC 14845 / NCIMB 13405 / ORS 571) protein is Translation initiation factor IF-2.